The chain runs to 650 residues: MDKNKDLLENEQFLRIQKLNASDAGKRQSILVDNEDELYGLTSSNNSCASEHEGEGEGEDERPATTSSAPTQNHSAGDVAFIPGKTAEEDTETVTKVVESDDQVFRTHVQTLSSKGKSRYRKGSSNFISFFDDMAFENRPSILDGSVNDPFKTKFVGPTLEKEIRKREKELMAMRKNLHHGKPAPDADAADAPALTTTTTTTTSATSPETVVTIETTILSSNFSGLYVAFWMAIAFGAVKALIDYYYQHNGSFKDSEILKFMTTNLSTVALIDLIMYLSTFFVVGIQYLCKWGVLNWSSTGWAFTSIYELLFVGFYMYLTENILKLHWLSKIFLFLHSLVLLMKMHSFAFYNGYLWGIKQELQFSKSALAKYKDSVNDPDVVDALEKSCEFCSFELNSQSLNDQTQKFPNNINVSNFFMFTMFPTLIYQIEYPRTKEIRWVYVLEKICAIFGTIFLMMIDAQILMHPVAMRALDVRNSEWTGILDRLLKWAGLLVDIVPGFIVMYILDFYLIWDAILNCVAELTRFGDRYFYGDWWNCVSWADFSRIWNIPVHKFLLRHVYHSSMSSFKLNKSQATLMTFFLSSVVHELAMYVIFKRLRFYLFFFQMLQVPLVALTNTKYMKDRTVIGNVIFWLGICMGPSVMCTLYLTF.

The disordered stretch occupies residues 41-79; the sequence is LTSSNNSCASEHEGEGEGEDERPATTSSAPTQNHSAGDV. The span at 64–75 shows a compositional bias: polar residues; it reads ATTSSAPTQNHS. 5 helical membrane passes run 223 to 243, 300 to 320, 412 to 432, 450 to 470, and 493 to 513; these read FSGLYVAFWMAIAFGAVKALI, TGWAFTSIYELLFVGFYMYLT, INVSNFFMFTMFPTLIYQIEY, IFGTIFLMMIDAQILMHPVAM, and LLVDIVPGFIVMYILDFYLIW. The FYXDWWN motif signature appears at 531–537; it reads FYGDWWN. 2 helical membrane-spanning segments follow: residues 575–595 and 630–650; these read ATLMTFFLSSVVHELAMYVIF and VIFWLGICMGPSVMCTLYLTF. His-587 is a catalytic residue.

This sequence belongs to the membrane-bound acyltransferase family. Sterol o-acyltransferase subfamily.

The protein resides in the endoplasmic reticulum membrane. In terms of biological role, sterol O-acyltransferase that catalyzes the formation of stery esters. The chain is Sterol O-acyltransferase 2 (ARE2) from Saccharomyces uvarum (strain ATCC 76518 / CBS 7001 / CLIB 283 / NBRC 10550 / MCYC 623 / NCYC 2669 / NRRL Y-11845) (Yeast).